The primary structure comprises 75 residues: Putative DNA-directed RNA polymerase subunit omega (75 aa).

The protein belongs to the RNA polymerase subunit omega family.

The protein localises to the plastid. Its subcellular location is the chloroplast. It carries out the reaction RNA(n) + a ribonucleoside 5'-triphosphate = RNA(n+1) + diphosphate. May be involved in RNA polymerase activity. This is Putative DNA-directed RNA polymerase subunit omega (rpoZ) from Mesostigma viride (Green alga).